Consider the following 473-residue polypeptide: Presenilin-B (473 aa).

Positions 1-141 (MSSDNNNDPF…PLLNKKEKDD (141 aa)) are disordered. Over 1–164 (MSSDNNNDPF…DDEVSLQDFS (164 aa)) the chain is Cytoplasmic. Positions 22-46 (RVSTTTSPNRQSINSSPKQSSPKST) are enriched in polar residues. The segment covering 54–72 (NIILDLNDNNNDNNNTNNY) has biased composition (low complexity). A compositionally biased stretch (basic and acidic residues) spans 79–89 (VDNKNKFENKD). A helical transmembrane segment spans residues 165-185 (SMIVSIIIPVSITMMAVVFFV). Topologically, residues 186–224 (KYLNNQTLYASTLSYTIAGGSSGGGSGADSITGNSFVDS) are lumenal. The N-linked (GlcNAc...) asparagine glycan is linked to N190. Residues 225–245 (LIVAGIVLGMIIVTTVAFVLL) traverse the membrane as a helical segment. The Cytoplasmic portion of the chain corresponds to 246-252 (YKYRCLK). A helical membrane pass occupies residues 253–273 (ILYGWLFLSVGMMLGSFGTTF). Topologically, residues 274–286 (FQAMLSAANLPLD) are lumenal. Residues 287-307 (YITFAFLIFNFTVCGIIGVFW) form a helical membrane-spanning segment. A topological domain (cytoplasmic) is located at residue Y308. The helical transmembrane segment at 309-329 (AHQYVNQLYLVIISVLMAISL) threads the bilayer. Residues 330 to 334 (TRLPQ) lie on the Lumenal side of the membrane. Residues 335-355 (WTIFTLLVIVAIYDLFAVLCP) traverse the membrane as a helical segment. The active site involves D348. At 356–389 (RGPLKVLVELSQERNENIPALVYETGKGSDSNLK) the chain is on the cytoplasmic side. Residues 390–410 (LGLGDFIFYSLLISRAALVHM) form a helical membrane-spanning segment. D394 is a catalytic residue. Residues 411 to 413 (SCV) lie on the Lumenal side of the membrane. Residues 414–434 (FSTFIAILTGLFLTLLCLAIF) traverse the membrane as a helical segment. At 435–442 (KKALPALP) the chain is on the cytoplasmic side. Residues 439–441 (PAL) carry the PAL motif. Residues 443-463 (ISIFLGILFYYLSNNFLTPFI) constitute an intramembrane region (helical). Residues 464 to 473 (EALTLSQIFV) lie on the Cytoplasmic side of the membrane.

It belongs to the peptidase A22A family. Homodimer. Component of the gamma-secretase complex, a complex composed of a presenilin homodimer, nicastrin, aph1 and pen2.

It is found in the endoplasmic reticulum membrane. The protein resides in the golgi apparatus membrane. Probable catalytic subunit of the gamma-secretase complex, an endoprotease complex that catalyzes the intramembrane cleavage of integral membrane proteins such as Notch receptors. Requires the other members of the gamma-secretase complex to have a protease activity. This chain is Presenilin-B (psenB), found in Dictyostelium discoideum (Social amoeba).